The chain runs to 537 residues: CTP synthase (537 aa).

The segment at 1 to 267 is amidoligase domain; the sequence is MAKFVFVTGG…ADIVLDKLGI (267 aa). Ser-13 lines the CTP pocket. Residue Ser-13 coordinates UTP. 14–19 provides a ligand contact to ATP; sequence SLGKGI. Tyr-54 lines the L-glutamine pocket. Residue Asp-71 participates in ATP binding. Mg(2+)-binding residues include Asp-71 and Glu-141. Residues 148-150, 188-193, and Lys-224 each bind CTP; these read DIE and KTKPTQ. UTP-binding positions include 188-193 and Lys-224; that span reads KTKPTQ. The Glutamine amidotransferase type-1 domain occupies 292–534; sequence TIALVGKYVS…IGAARKYKES (243 aa). Position 354 (Gly-354) interacts with L-glutamine. The active-site Nucleophile; for glutamine hydrolysis is the Cys-381. Residues 382–385, Glu-405, and Arg-462 contribute to the L-glutamine site; that span reads LGMQ. Residues His-507 and Glu-509 contribute to the active site.

This sequence belongs to the CTP synthase family. In terms of assembly, homotetramer.

The catalysed reaction is UTP + L-glutamine + ATP + H2O = CTP + L-glutamate + ADP + phosphate + 2 H(+). It catalyses the reaction L-glutamine + H2O = L-glutamate + NH4(+). The enzyme catalyses UTP + NH4(+) + ATP = CTP + ADP + phosphate + 2 H(+). It functions in the pathway pyrimidine metabolism; CTP biosynthesis via de novo pathway; CTP from UDP: step 2/2. Allosterically activated by GTP, when glutamine is the substrate; GTP has no effect on the reaction when ammonia is the substrate. The allosteric effector GTP functions by stabilizing the protein conformation that binds the tetrahedral intermediate(s) formed during glutamine hydrolysis. Inhibited by the product CTP, via allosteric rather than competitive inhibition. Its function is as follows. Catalyzes the ATP-dependent amination of UTP to CTP with either L-glutamine or ammonia as the source of nitrogen. Regulates intracellular CTP levels through interactions with the four ribonucleotide triphosphates. The chain is CTP synthase from Pelotomaculum thermopropionicum (strain DSM 13744 / JCM 10971 / SI).